The sequence spans 213 residues: Thymidylate kinase (213 aa).

9 to 16 (GLEGAGKS) contacts ATP.

The protein belongs to the thymidylate kinase family.

It carries out the reaction dTMP + ATP = dTDP + ADP. In terms of biological role, phosphorylation of dTMP to form dTDP in both de novo and salvage pathways of dTTP synthesis. This is Thymidylate kinase from Aeromonas hydrophila subsp. hydrophila (strain ATCC 7966 / DSM 30187 / BCRC 13018 / CCUG 14551 / JCM 1027 / KCTC 2358 / NCIMB 9240 / NCTC 8049).